The sequence spans 932 residues: Isoleucine--tRNA ligase (932 aa).

A 'HIGH' region motif is present at residues 58-68 (PYANGDIHIGH). Position 570 (glutamate 570) interacts with L-isoleucyl-5'-AMP. The 'KMSKS' region motif lies at 611 to 615 (KMSKS). Lysine 614 contributes to the ATP binding site. The Zn(2+) site is built by cysteine 895, cysteine 898, cysteine 915, and cysteine 918.

It belongs to the class-I aminoacyl-tRNA synthetase family. IleS type 1 subfamily. In terms of assembly, monomer. Requires Zn(2+) as cofactor.

It is found in the cytoplasm. It carries out the reaction tRNA(Ile) + L-isoleucine + ATP = L-isoleucyl-tRNA(Ile) + AMP + diphosphate. Its function is as follows. Catalyzes the attachment of isoleucine to tRNA(Ile). As IleRS can inadvertently accommodate and process structurally similar amino acids such as valine, to avoid such errors it has two additional distinct tRNA(Ile)-dependent editing activities. One activity is designated as 'pretransfer' editing and involves the hydrolysis of activated Val-AMP. The other activity is designated 'posttransfer' editing and involves deacylation of mischarged Val-tRNA(Ile). This chain is Isoleucine--tRNA ligase, found in Dechloromonas aromatica (strain RCB).